The chain runs to 331 residues: UPF0324 membrane protein SERP0111 (331 aa).

A run of 10 helical transmembrane segments spans residues 7–26 (ASFM…SYIL), 31–48 (ILHT…AMIY), 69–88 (LLKF…DILG), 93–115 (LLLI…NQII), 122–144 (SILL…APIL), 154–176 (SVGI…EAIF), 183–205 (YGAW…GIGG), 249–271 (IPYF…IPSL), 275–297 (IINV…NIVL), and 308–330 (FIVI…SIMF).

Belongs to the UPF0324 family.

Its subcellular location is the cell membrane. The polypeptide is UPF0324 membrane protein SERP0111 (Staphylococcus epidermidis (strain ATCC 35984 / DSM 28319 / BCRC 17069 / CCUG 31568 / BM 3577 / RP62A)).